Here is a 121-residue protein sequence, read N- to C-terminus: MKLSVIVLVASFGFAVALPSKKREETAAENELTGDQQDAEQHMIYAVAFPEIRTSCVIGWKQQGATCERDCECCGVAATCITGDKSTGFCGYHQTPNVLGQGILYTADTIKNGFSAIFCAG.

The N-terminal stretch at 1–17 (MKLSVIVLVASFGFAVA) is a signal peptide. 4 cysteine pairs are disulfide-bonded: cysteine 56/cysteine 74, cysteine 67/cysteine 80, cysteine 71/cysteine 119, and cysteine 73/cysteine 90.

The protein belongs to the neurotoxin 03 (Tx2) family. 03 subfamily. In terms of tissue distribution, expressed by the venom gland.

It is found in the secreted. Ion channel inhibitor. The sequence is that of U15-barytoxin-Tl1a from Trittame loki (Brush-footed trapdoor spider).